Consider the following 149-residue polypeptide: Transcription antitermination protein NusB (149 aa).

Belongs to the NusB family.

Involved in transcription antitermination. Required for transcription of ribosomal RNA (rRNA) genes. Binds specifically to the boxA antiterminator sequence of the ribosomal RNA (rrn) operons. This Caulobacter vibrioides (strain ATCC 19089 / CIP 103742 / CB 15) (Caulobacter crescentus) protein is Transcription antitermination protein NusB.